We begin with the raw amino-acid sequence, 294 residues long: Beta-lactamase SME-1 (294 aa).

The N-terminal stretch at 1–27 is a signal peptide; the sequence is MSNKVNFKTASFLFSVCLALSAFNAHA. The cysteines at positions 72 and 242 are disulfide-linked. S73 acts as the Nucleophile; acyl-ester intermediate in catalysis. Residues S73, K76, S133, and N135 each contribute to the a beta-lactam site. Catalysis depends on E172, which acts as the Proton acceptor. T239 lines the a beta-lactam pocket.

The protein belongs to the class-A beta-lactamase family.

It carries out the reaction a beta-lactam + H2O = a substituted beta-amino acid. Its activity is regulated as follows. Partially inhibited by the beta-lactamase-blocking agents, clavulanic acid and tazobactam. Not inhibited by EDTA. Its function is as follows. Class A beta-lactamase which confers resistance to the beta-lactam antibiotics, including penicillins, some cephalosporins and carbapenems, to JM109 strain E.coli. Acts via hydrolysis of the beta-lactam ring. Has penicillin-, cephalosporin- and carbapenem-hydrolyzing activities. This is Beta-lactamase SME-1 from Serratia marcescens.